The chain runs to 142 residues: Large ribosomal subunit protein uL13 (142 aa).

This sequence belongs to the universal ribosomal protein uL13 family. As to quaternary structure, part of the 50S ribosomal subunit.

This protein is one of the early assembly proteins of the 50S ribosomal subunit, although it is not seen to bind rRNA by itself. It is important during the early stages of 50S assembly. The sequence is that of Large ribosomal subunit protein uL13 from Aeromonas salmonicida (strain A449).